The following is a 184-amino-acid chain: Troponin I, slow skeletal muscle (184 aa).

P1 is modified (N-acetylproline; partial). Residues 1–45 (PEVERKSKITASRKLLKSLMLAKAKECQQEHEAREAEKVRYLAER) are involved in binding TNC. S55 carries the post-translational modification Phosphoserine. An involved in binding TNC and actin region spans residues 94–115 (LKLKVLDLRGKFKRPPLRRVRV).

Belongs to the troponin I family. As to quaternary structure, binds to actin and tropomyosin. In the muscle sample, approximately 25% of the chains were blocked. Pro-1 is probably acetylated. Post-translationally, the N-terminus is blocked.

Functionally, troponin I is the inhibitory subunit of troponin, the thin filament regulatory complex which confers calcium-sensitivity to striated muscle actomyosin ATPase activity. The chain is Troponin I, slow skeletal muscle (TNNI1) from Oryctolagus cuniculus (Rabbit).